The following is a 240-amino-acid chain: Epoxyqueuosine reductase QueH (240 aa).

Residues Cys43, Cys44, Cys129, and Cys132 each contribute to the [4Fe-4S] cluster site. An intrachain disulfide couples Cys211 to Cys213.

The protein belongs to the QueH family.

The enzyme catalyses epoxyqueuosine(34) in tRNA + AH2 = queuosine(34) in tRNA + A + H2O. It functions in the pathway tRNA modification; tRNA-queuosine biosynthesis. Functionally, catalyzes the conversion of epoxyqueuosine (oQ) to queuosine (Q), which is a hypermodified base found in the wobble positions of tRNA(Asp), tRNA(Asn), tRNA(His) and tRNA(Tyr). The sequence is that of Epoxyqueuosine reductase QueH from Staphylococcus aureus (strain Mu50 / ATCC 700699).